We begin with the raw amino-acid sequence, 878 residues long: Bifunctional heparan sulfate N-deacetylase/N-sulfotransferase 1 (878 aa).

Over 1-17 (MSLSLKTRRFGRPVRPQ) the chain is Cytoplasmic. A sufficient for localization to Golgi membrane region spans residues 1-169 (MSLSLKTRRF…VEYGVGIIGF (169 aa)). A helical; Signal-anchor for type II membrane protein transmembrane segment spans residues 18–38 (LVLLLLFALCLLSVFISAYYL). Residues 39–878 (YGWKRGLEPS…WLREELQSTR (840 aa)) are Lumenal-facing. The heparan sulfate N-deacetylase 1 stretch occupies residues 40–594 (GWKRGLEPSG…KRHKDIWSKE (555 aa)). The interval 47–71 (PSGSEAQSPDCDEPKISPSRLLPMK) is disordered. N-linked (GlcNAc...) asparagine glycosylation is found at Asn-231, Asn-347, and Asn-397. Positions 595 to 878 (KTCDRFPKLL…WLREELQSTR (284 aa)) are heparan sulfate N-sulfotransferase 1. Lys-610 functions as the For sulfotransferase activity in the catalytic mechanism. Position 610-614 (610-614 (KTGTT)) interacts with adenosine 3',5'-bisphosphate. N-linked (GlcNAc...) asparagine glycosylation is present at Asn-663. Residues Ser-708 and Trp-813 each contribute to the adenosine 3',5'-bisphosphate site. Cys-814 and Cys-824 are joined by a disulfide. 829–833 (KGRKY) contributes to the adenosine 3',5'-bisphosphate binding site.

It belongs to the sulfotransferase 1 family. NDST subfamily. As to quaternary structure, monomer.

The protein resides in the golgi apparatus membrane. It is found in the golgi apparatus. It localises to the trans-Golgi network membrane. The enzyme catalyses alpha-D-glucosaminyl-[heparan sulfate](n) + 3'-phosphoadenylyl sulfate = N-sulfo-alpha-D-glucosaminyl-[heparan sulfate](n) + adenosine 3',5'-bisphosphate + 2 H(+). It functions in the pathway glycan metabolism; heparan sulfate biosynthesis. It participates in glycan metabolism; heparin biosynthesis. In terms of biological role, essential bifunctional enzyme that catalyzes both the N-deacetylation and the N-sulfation of glucosamine (GlcNAc) of the glycosaminoglycan in heparan sulfate. Modifies the GlcNAc-GlcA disaccharide repeating sugar backbone to make N-sulfated heparosan, a prerequisite substrate for later modifications in heparin biosynthesis. Plays a role in determining the extent and pattern of sulfation of heparan sulfate. The protein is Bifunctional heparan sulfate N-deacetylase/N-sulfotransferase 1 (ndst1) of Xenopus tropicalis (Western clawed frog).